We begin with the raw amino-acid sequence, 20 residues long: Peptide encoded by miPEP171b (20 aa).

Lateral root initiations.

Its function is as follows. Regulatory peptide encoded by the primary transcript (pri-miR171b) of the microRNA miR171b that enhances the accumulation of its corresponding mature miRNA. Acts probably as a transcriptional activator of its corresponding pri-miRNA. Has no effect on the accumulation of other miRNAs. Addition of synthetic miPEP171b increases the abundance of miR171b, with consequent reduction of lateral root formation. The sequence is that of Peptide encoded by miPEP171b from Medicago truncatula (Barrel medic).